Reading from the N-terminus, the 494-residue chain is UPF0371 protein SPH_0451 (494 aa).

It belongs to the UPF0371 family.

This Streptococcus pneumoniae (strain Hungary19A-6) protein is UPF0371 protein SPH_0451.